The primary structure comprises 513 residues: Matrix metalloproteinase-27 (513 aa).

Positions 1-17 are cleaved as a signal peptide; that stretch reads MKRLLLLFLFFITFSSA. Residues 18-98 constitute a propeptide, activation peptide; that stretch reads FPLVRMTENE…PRCGVPDVGQ (81 aa). Asparagine 55 carries N-linked (GlcNAc...) asparagine glycosylation. Positions 89–96 match the Cysteine switch motif; sequence PRCGVPDV. Cysteine 91 is a binding site for Zn(2+). N-linked (GlcNAc...) asparagine glycosylation occurs at asparagine 110. The Ca(2+) site is built by aspartate 121 and aspartate 155. Histidine 165 lines the Zn(2+) pocket. Aspartate 173, glycine 174, and valine 178 together coordinate Ca(2+). Histidine 181 provides a ligand contact to Zn(2+). 2 residues coordinate Ca(2+): glycine 188 and aspartate 192. Histidine 194 contributes to the Zn(2+) binding site. Ca(2+)-binding residues include aspartate 196 and glutamate 199. A Zn(2+)-binding site is contributed by histidine 216. Glutamate 217 is an active-site residue. Residues histidine 220 and histidine 226 each coordinate Zn(2+). Hemopexin repeat units lie at residues 276–325, 326–371, 373–421, and 422–465; these read PHAC…WPSL, PADL…GFPG, VKKI…FPGI, and SIRV…WFQC. Cysteine 279 and cysteine 465 are oxidised to a cystine. Residue aspartate 286 coordinates Ca(2+). Residues aspartate 377 and aspartate 426 each coordinate Ca(2+). An N-linked (GlcNAc...) asparagine glycan is attached at asparagine 452. A required for retention in the endoplasmic reticulum region spans residues 466–513; it reads KEPKNSSFGFDINKEKAHSGGIKILYHKSLSLFIFGIVHLLKNTSIYQ.

Belongs to the peptidase M10A family. Ca(2+) is required as a cofactor. It depends on Zn(2+) as a cofactor. Post-translationally, N-glycosylated. As to expression, expressed in B-cells. Expressed in a subset of endometrial macrophages related to menstruation and in ovarian and peritoneal endometriotic lesions (at protein level).

It is found in the endoplasmic reticulum. Its function is as follows. Matrix metalloproteinases degrade protein components of the extracellular matrix such as fibronectin, laminin, gelatins and/or collagens. The sequence is that of Matrix metalloproteinase-27 (MMP27) from Homo sapiens (Human).